We begin with the raw amino-acid sequence, 618 residues long: Manganese lipoxygenase (618 aa).

Positions 1 to 16 (MRSRILAIVFAARHVA) are cleaved as a signal peptide. Positions 36-45 (SSTTVLPSPT) are enriched in low complexity. A disordered region spans residues 36-58 (SSTTVLPSPTQYTLPNNDPNQGA). Residues 46 to 58 (QYTLPNNDPNQGA) are compositionally biased toward polar residues. In terms of domain architecture, Lipoxygenase spans 47 to 617 (YTLPNNDPNQ…NPAVNPFFLS (571 aa)). N-linked (GlcNAc...) asparagine glycans are attached at residues N60, N91, N106, N116, and N157. Residues H290, H294, H478, and N482 each coordinate Mn(2+). A glycan (N-linked (GlcNAc...) asparagine) is linked at N513. Residue V618 participates in Mn(2+) binding.

It belongs to the lipoxygenase family. Requires Mn(2+) as cofactor. In terms of processing, N- and O-glycosylated.

Its subcellular location is the secreted. It catalyses the reaction (9Z,12Z)-octadecadienoate + O2 = (11S)-hydroperoxy-(9Z,12Z)-octadecadienoate. The enzyme catalyses (9Z,12Z)-octadecadienoate + O2 = (13R)-hydroperoxy-(9Z,11E)-octadecadienoate. It carries out the reaction (9Z,12Z,15Z)-octadecatrienoate + O2 = (11S)-hydroperoxy-(9Z,12Z,15Z)-octadecatrienoate. The catalysed reaction is (9Z,12Z,15Z)-octadecatrienoate + O2 = (13R)-hydroperoxy-(9Z,11E,15Z)-octadecatrienoate. Its function is as follows. Lipoxygenase that metabolizes linoleic and alpha-linolenic acids to 11S- and 13R-hydroperoxy fatty acids. At the end of lipoxygenation, the intermediate product 11S-HPODE from linoleic acid is then transformed into 13R-HPODE as the final product. It also acts on alpha-linolenic acid producing 11S-HPOTrE and 13R-HPOTrE with subsequent transformation of 11S-HPOTrE to 13R-HPOTrE as the final product. Gamma-linolenic acid is a poor substrate. Oleate and arachidonate are not substrates. The sequence is that of Manganese lipoxygenase from Gaeumannomyces tritici (Wheat and barley take-all root rot fungus).